The primary structure comprises 357 residues: Neurogenic differentiation factor 1 (357 aa).

The segment at 1–94 (MTKSYSESGL…GPKKKKMTKA (94 aa)) is disordered. Residues 58 to 78 (EEEDEDEDLEEEEEEEEEEDD) are compositionally biased toward acidic residues. The span at 81 to 93 (PKRRGPKKKKMTK) shows a compositional bias: basic residues. A Nuclear localization signal motif is present at residues 87–93 (KKKKMTK). Positions 101–153 (LRRMKANARERNRMHGLNAALDNLRKVVPCYSKTQKLSKIETLRLAKNYIWAL) constitute a bHLH domain. Phosphoserine occurs at positions 162, 259, 266, and 274. Position 336 is a phosphoserine; by CaMK2 (Ser336).

In terms of assembly, efficient DNA-binding requires dimerization with another bHLH protein. Heterodimer with TCF3/E47; the heterodimer is inhibited in presence of ID2, but not NR0B2, to E-box element. Interacts with EP300; the interaction is inhibited by NR0B2. Interacts with RREB1. Interacts with ATOH8. Post-translationally, phosphorylated by MAPK1; phosphorylation regulates heterodimerization and DNA-binding activities. Phosphorylation on Ser-266 and Ser-274 increases transactivation on the insulin promoter in glucose-stimulated insulinoma cells. Phosphorylated. In islet cells, phosphorylated on Ser-274 upon glucose stimulation; which may be required for nuclear localization. In activated neurons, phosphorylated on Ser-336 by CaMK2; which promotes dendritic growth.

Its subcellular location is the cytoplasm. The protein resides in the nucleus. Acts as a transcriptional activator: mediates transcriptional activation by binding to E box-containing promoter consensus core sequences 5'-CANNTG-3'. Associates with the p300/CBP transcription coactivator complex to stimulate transcription of the secretin gene as well as the gene encoding the cyclin-dependent kinase inhibitor CDKN1A. Contributes to the regulation of several cell differentiation pathways, like those that promote the formation of early retinal ganglion cells, inner ear sensory neurons, granule cells forming either the cerebellum or the dentate gyrus cell layer of the hippocampus, endocrine islet cells of the pancreas and enteroendocrine cells of the small intestine. Together with PAX6 or SIX3, is required for the regulation of amacrine cell fate specification. Also required for dendrite morphogenesis and maintenance in the cerebellar cortex. Associates with chromatin to enhancer regulatory elements in genes encoding key transcriptional regulators of neurogenesis. The sequence is that of Neurogenic differentiation factor 1 (Neurod1) from Rattus norvegicus (Rat).